A 177-amino-acid polypeptide reads, in one-letter code: Large ribosomal subunit protein uL6 (177 aa).

The protein belongs to the universal ribosomal protein uL6 family. In terms of assembly, part of the 50S ribosomal subunit.

In terms of biological role, this protein binds to the 23S rRNA, and is important in its secondary structure. It is located near the subunit interface in the base of the L7/L12 stalk, and near the tRNA binding site of the peptidyltransferase center. In Rhizobium leguminosarum bv. trifolii (strain WSM2304), this protein is Large ribosomal subunit protein uL6.